The following is an 80-amino-acid chain: Small ribosomal subunit protein uS17c (80 aa).

It belongs to the universal ribosomal protein uS17 family. As to quaternary structure, part of the 30S ribosomal subunit.

It is found in the plastid. The protein resides in the chloroplast. One of the primary rRNA binding proteins, it binds specifically to the 5'-end of 16S ribosomal RNA. This is Small ribosomal subunit protein uS17c (rps17) from Gracilaria tenuistipitata var. liui (Red alga).